A 434-amino-acid polypeptide reads, in one-letter code: RNA polymerase II holoenzyme cyclin-like subunit (434 aa).

A Cyclin N-terminal domain is found at 23–155 (EARRRVLLLE…LIEEMDSYLL (133 aa)). Positions 248-278 (GSSTNPININNNNNTNTSNNNGTTSTTTTTT) are enriched in low complexity. Disordered stretches follow at residues 248–292 (GSST…DNTE), 301–320 (LTKS…DIDN), and 330–362 (QIQN…GQIS). Residues 330 to 359 (QIQNQTQHQHQESTHNNTSSTNTGRNGING) are compositionally biased toward low complexity.

Belongs to the cyclin family. Cyclin C subfamily. As to quaternary structure, component of the SRB8-11 complex, a regulatory module of the Mediator complex.

It is found in the nucleus. Its function is as follows. Component of the SRB8-11 complex. The SRB8-11 complex is a regulatory module of the Mediator complex which is itself involved in regulation of basal and activated RNA polymerase II-dependent transcription. The SRB8-11 complex may be involved in the transcriptional repression of a subset of genes regulated by Mediator. It may inhibit the association of the Mediator complex with RNA polymerase II to form the holoenzyme complex. The SRB8-11 complex phosphorylates the C-terminal domain (CTD) of the largest subunit of RNA polymerase II. The polypeptide is RNA polymerase II holoenzyme cyclin-like subunit (SSN8) (Candida albicans (strain SC5314 / ATCC MYA-2876) (Yeast)).